A 338-amino-acid chain; its full sequence is Methionine import ATP-binding protein MetN 1 (338 aa).

The region spanning 2–241 (IQLENIEKHY…PNEKLTKDFI (240 aa)) is the ABC transporter domain. 38-45 (GYSGAGKS) provides a ligand contact to ATP.

The protein belongs to the ABC transporter superfamily. Methionine importer (TC 3.A.1.24) family. The complex is composed of two ATP-binding proteins (MetN), two transmembrane proteins (MetI) and a solute-binding protein (MetQ).

It is found in the cell membrane. The enzyme catalyses L-methionine(out) + ATP + H2O = L-methionine(in) + ADP + phosphate + H(+). It catalyses the reaction D-methionine(out) + ATP + H2O = D-methionine(in) + ADP + phosphate + H(+). In terms of biological role, part of the ABC transporter complex MetNIQ involved in methionine import. Responsible for energy coupling to the transport system. The chain is Methionine import ATP-binding protein MetN 1 from Oceanobacillus iheyensis (strain DSM 14371 / CIP 107618 / JCM 11309 / KCTC 3954 / HTE831).